A 314-amino-acid polypeptide reads, in one-letter code: Putative methylthioribose-1-phosphate isomerase (314 aa).

Substrate contacts are provided by residues 45–47 (RGA), R79, and Q177. The Proton donor role is filled by D218. Residue 227-228 (NK) coordinates substrate.

Belongs to the eIF-2B alpha/beta/delta subunits family. MtnA subfamily.

It catalyses the reaction 5-(methylsulfanyl)-alpha-D-ribose 1-phosphate = 5-(methylsulfanyl)-D-ribulose 1-phosphate. Functionally, catalyzes the interconversion of methylthioribose-1-phosphate (MTR-1-P) into methylthioribulose-1-phosphate (MTRu-1-P). This Methanosphaera stadtmanae (strain ATCC 43021 / DSM 3091 / JCM 11832 / MCB-3) protein is Putative methylthioribose-1-phosphate isomerase.